Reading from the N-terminus, the 150-residue chain is Transcriptional regulator MraZ (150 aa).

2 SpoVT-AbrB domains span residues 5–52 and 81–124; these read VTHL…PLPD and AHDL…DAEA.

The protein belongs to the MraZ family. Forms oligomers.

The protein resides in the cytoplasm. The protein localises to the nucleoid. This is Transcriptional regulator MraZ from Alkalilimnicola ehrlichii (strain ATCC BAA-1101 / DSM 17681 / MLHE-1).